Consider the following 132-residue polypeptide: Glycine cleavage system H protein (132 aa).

Positions 24–106 (TVRVGLTDFA…YGAGWLLDVH (83 aa)) constitute a Lipoyl-binding domain. Lys-65 carries the N6-lipoyllysine modification.

The protein belongs to the GcvH family. The glycine cleavage system is composed of four proteins: P, T, L and H. (R)-lipoate serves as cofactor.

Its function is as follows. The glycine cleavage system catalyzes the degradation of glycine. The H protein shuttles the methylamine group of glycine from the P protein to the T protein. The chain is Glycine cleavage system H protein from Mycobacterium leprae (strain Br4923).